The sequence spans 694 residues: uncharacterized protein (694 aa).

The Resolvase/invertase-type recombinase catalytic domain occupies 17-168; it reads DAFLYVRQSS…GGILNKARRG (152 aa). Catalysis depends on Ser25, which acts as the O-(5'-phospho-DNA)-serine intermediate. Residues 175–316 constitute a DNA-binding region (recombinase); it reads PIGLVYTPDA…QAALEQNATG (142 aa). Residues 386 to 406 traverse the membrane as a helical segment; sequence AVSALLLEVMAPAAIDVALAV.

Its subcellular location is the membrane. This is an uncharacterized protein from Sinorhizobium fredii (strain NBRC 101917 / NGR234).